Here is a 259-residue protein sequence, read N- to C-terminus: UPF0246 protein PSPA7_1607 (259 aa).

The protein belongs to the UPF0246 family.

The sequence is that of UPF0246 protein PSPA7_1607 from Pseudomonas paraeruginosa (strain DSM 24068 / PA7) (Pseudomonas aeruginosa (strain PA7)).